Reading from the N-terminus, the 78-residue chain is Short neurotoxin OH-46 (78 aa).

The signal sequence occupies residues 1-21 (MKNLLLTFLVVTIVCLDLGYT). Disulfide bonds link Cys24-Cys40, Cys33-Cys58, Cys62-Cys70, and Cys71-Cys76.

It belongs to the three-finger toxin family. Short-chain subfamily. In terms of tissue distribution, expressed by the venom gland.

The protein resides in the secreted. In terms of biological role, this three-finger toxin binds and inhibits the nicotinic acetylcholine receptor (nAChR). In Ophiophagus hannah (King cobra), this protein is Short neurotoxin OH-46.